A 140-amino-acid chain; its full sequence is MSIMQVEVVSSEQKIYSGEATFIVVPTVQGELGIYPRHEPIMSLVRPGALRLTVPGEDKEVLVAVSGGVLEVQPDKVTVLADVAVRSAEMDRARAEEAKKAAEAGISQAKDDKALAEAHKVLAAAIAQLKTLDYIRSHKK.

Belongs to the ATPase epsilon chain family. As to quaternary structure, F-type ATPases have 2 components, CF(1) - the catalytic core - and CF(0) - the membrane proton channel. CF(1) has five subunits: alpha(3), beta(3), gamma(1), delta(1), epsilon(1). CF(0) has three main subunits: a, b and c.

Its subcellular location is the cell inner membrane. In terms of biological role, produces ATP from ADP in the presence of a proton gradient across the membrane. The polypeptide is ATP synthase epsilon chain (Neisseria meningitidis serogroup B (strain ATCC BAA-335 / MC58)).